We begin with the raw amino-acid sequence, 351 residues long: UDP-3-O-acylglucosamine N-acyltransferase (351 aa).

His240 serves as the catalytic Proton acceptor.

The protein belongs to the transferase hexapeptide repeat family. LpxD subfamily. Homotrimer.

The enzyme catalyses a UDP-3-O-[(3R)-3-hydroxyacyl]-alpha-D-glucosamine + a (3R)-hydroxyacyl-[ACP] = a UDP-2-N,3-O-bis[(3R)-3-hydroxyacyl]-alpha-D-glucosamine + holo-[ACP] + H(+). It participates in bacterial outer membrane biogenesis; LPS lipid A biosynthesis. In terms of biological role, catalyzes the N-acylation of UDP-3-O-acylglucosamine using 3-hydroxyacyl-ACP as the acyl donor. Is involved in the biosynthesis of lipid A, a phosphorylated glycolipid that anchors the lipopolysaccharide to the outer membrane of the cell. This chain is UDP-3-O-acylglucosamine N-acyltransferase, found in Pseudomonas putida (strain ATCC 700007 / DSM 6899 / JCM 31910 / BCRC 17059 / LMG 24140 / F1).